Here is a 293-residue protein sequence, read N- to C-terminus: 33 kDa chaperonin (293 aa).

2 cysteine pairs are disulfide-bonded: Cys-238-Cys-240 and Cys-271-Cys-274.

The protein belongs to the HSP33 family. Under oxidizing conditions two disulfide bonds are formed involving the reactive cysteines. Under reducing conditions zinc is bound to the reactive cysteines and the protein is inactive.

Its subcellular location is the cytoplasm. In terms of biological role, redox regulated molecular chaperone. Protects both thermally unfolding and oxidatively damaged proteins from irreversible aggregation. Plays an important role in the bacterial defense system toward oxidative stress. This is 33 kDa chaperonin from Staphylococcus aureus (strain USA300).